We begin with the raw amino-acid sequence, 333 residues long: Glycerol-3-phosphate dehydrogenase [NAD(P)+] (333 aa).

4 residues coordinate NADPH: serine 13, tyrosine 14, arginine 34, and lysine 108. The sn-glycerol 3-phosphate site is built by lysine 108, glycine 137, and threonine 139. Alanine 141 is an NADPH binding site. Lysine 193, aspartate 246, serine 256, arginine 257, and asparagine 258 together coordinate sn-glycerol 3-phosphate. Residue lysine 193 is the Proton acceptor of the active site. Arginine 257 is an NADPH binding site. Glutamate 283 provides a ligand contact to NADPH.

This sequence belongs to the NAD-dependent glycerol-3-phosphate dehydrogenase family.

Its subcellular location is the cytoplasm. The catalysed reaction is sn-glycerol 3-phosphate + NAD(+) = dihydroxyacetone phosphate + NADH + H(+). The enzyme catalyses sn-glycerol 3-phosphate + NADP(+) = dihydroxyacetone phosphate + NADPH + H(+). It functions in the pathway membrane lipid metabolism; glycerophospholipid metabolism. Catalyzes the reduction of the glycolytic intermediate dihydroxyacetone phosphate (DHAP) to sn-glycerol 3-phosphate (G3P), the key precursor for phospholipid synthesis. This Idiomarina loihiensis (strain ATCC BAA-735 / DSM 15497 / L2-TR) protein is Glycerol-3-phosphate dehydrogenase [NAD(P)+].